Reading from the N-terminus, the 152-residue chain is SsrA-binding protein (152 aa).

This sequence belongs to the SmpB family.

Its subcellular location is the cytoplasm. In terms of biological role, required for rescue of stalled ribosomes mediated by trans-translation. Binds to transfer-messenger RNA (tmRNA), required for stable association of tmRNA with ribosomes. tmRNA and SmpB together mimic tRNA shape, replacing the anticodon stem-loop with SmpB. tmRNA is encoded by the ssrA gene; the 2 termini fold to resemble tRNA(Ala) and it encodes a 'tag peptide', a short internal open reading frame. During trans-translation Ala-aminoacylated tmRNA acts like a tRNA, entering the A-site of stalled ribosomes, displacing the stalled mRNA. The ribosome then switches to translate the ORF on the tmRNA; the nascent peptide is terminated with the 'tag peptide' encoded by the tmRNA and targeted for degradation. The ribosome is freed to recommence translation, which seems to be the essential function of trans-translation. This Rickettsia peacockii (strain Rustic) protein is SsrA-binding protein.